The chain runs to 837 residues: Valine--tRNA ligase (837 aa).

The short motif at 46-56 (PNLTGTLHIGH) is the 'HIGH' region element. The 'KMSKS' region signature appears at 514-518 (KMSKS). Lys517 contacts ATP. Positions 767 to 837 (VDDTTQRLKS…QLIAKLTKAH (71 aa)) form a coiled coil.

It belongs to the class-I aminoacyl-tRNA synthetase family. ValS type 1 subfamily. Monomer.

Its subcellular location is the cytoplasm. The catalysed reaction is tRNA(Val) + L-valine + ATP = L-valyl-tRNA(Val) + AMP + diphosphate. Functionally, catalyzes the attachment of valine to tRNA(Val). As ValRS can inadvertently accommodate and process structurally similar amino acids such as threonine, to avoid such errors, it has a 'posttransfer' editing activity that hydrolyzes mischarged Thr-tRNA(Val) in a tRNA-dependent manner. In Mycoplasma genitalium (strain ATCC 33530 / DSM 19775 / NCTC 10195 / G37) (Mycoplasmoides genitalium), this protein is Valine--tRNA ligase.